We begin with the raw amino-acid sequence, 134 residues long: Retinol-binding protein 2 (134 aa).

Residues Lys-41 and Gln-109 each coordinate all-trans-retinol.

This sequence belongs to the calycin superfamily. Fatty-acid binding protein (FABP) family.

It localises to the cytoplasm. Its function is as follows. Intracellular transport of retinol. This Sus scrofa (Pig) protein is Retinol-binding protein 2 (RBP2).